A 914-amino-acid chain; its full sequence is Neuropilin-1 (914 aa).

An N-terminal signal peptide occupies residues 1–18; that stretch reads MDWGLFLHCAALTFTLSR. Over 20–847 the chain is Extracellular; the sequence is LRSDKCGDTI…PGNVLKTLDP (828 aa). 3 cysteine pairs are disulfide-bonded: C25-C52, C80-C102, and C145-C171. CUB domains lie at 25–139 and 145–263; these read CGDT…YEVF and CSRN…YSVS. A glycan (N-linked (GlcNAc...) asparagine) is linked at N148. E193, D207, and D248 together coordinate Ca(2+). C204 and C226 are joined by a disulfide. N-linked (GlcNAc...) asparagine glycosylation is present at N259. Cystine bridges form between C273/C422 and C429/C581. 2 F5/8 type C domains span residues 273 to 422 and 429 to 581; these read CMEP…VYGC and CSGM…LLGC. The N-linked (GlcNAc...) asparagine glycan is linked to N520. S610 carries an O-linked (Xyl...) (chondroitin sulfate) serine; alternate glycan. S610 carries an O-linked (Xyl...) (heparan sulfate) serine; alternate glycan. Residues 636-801 form the MAM domain; the sequence is PYNLNCGFGW…NHISQEDCQK (166 aa). The disordered stretch occupies residues 809-829; sequence IVEEDPESNQTGFTPSYRTDE. The segment covering 816 to 825 has biased composition (polar residues); the sequence is SNQTGFTPSY. Residue N817 is glycosylated (N-linked (GlcNAc...) asparagine). Residues 848–870 form a helical membrane-spanning segment; the sequence is ILITIIAMSALGVLLGAICGVVL. Over 871–914 the chain is Cytoplasmic; it reads YCACWHNGMSERNLSALENYNFELVDGVKLKKDKLNTQNSYSEA.

It belongs to the neuropilin family. Homodimer, and heterodimer. As to expression, developing nervous system; optic tectum (layers D and E of SGFS), amacrine cells of retina, neurites of dorsal root ganglia. Also expressed in non-neuronal cells, e.g. blood vessels in the entire embryo.

It is found in the mitochondrion membrane. Its subcellular location is the cell membrane. In terms of biological role, receptor involved in the development of the cardiovascular system, in angiogenesis, in the formation of certain neuronal circuits and in organogenesis outside the nervous system. Mediates the chemorepulsant activity of semaphorins. Binding to VEGFA initiates a signaling pathway needed for motor neuron axon guidance and cell body migration, including for the caudal migration of facial motor neurons from rhombomere 4 to rhombomere 6 during embryonic development. Regulates mitochondrial iron transport via interaction. This chain is Neuropilin-1 (NRP1), found in Gallus gallus (Chicken).